The primary structure comprises 561 residues: Arginine--tRNA ligase (561 aa).

The 'HIGH' region signature appears at 129–139 (ANPTGPLHVGH).

It belongs to the class-I aminoacyl-tRNA synthetase family. Monomer.

It is found in the cytoplasm. It catalyses the reaction tRNA(Arg) + L-arginine + ATP = L-arginyl-tRNA(Arg) + AMP + diphosphate. In Bordetella avium (strain 197N), this protein is Arginine--tRNA ligase.